A 34-amino-acid polypeptide reads, in one-letter code: Photosystem II reaction center protein Psb30 (34 aa).

The chain crosses the membrane as a helical span at residues 6–26 (VIGQLLSATLIVLAGPAVIFV).

The protein belongs to the Psb30/Ycf12 family. In terms of assembly, PSII is composed of 1 copy each of membrane proteins PsbA, PsbB, PsbC, PsbD, PsbE, PsbF, PsbH, PsbI, PsbJ, PsbK, PsbL, PsbM, PsbT, PsbX, PsbY, PsbZ, Psb30/Ycf12, peripheral proteins of the oxygen-evolving complex and a large number of cofactors. It forms dimeric complexes.

It is found in the plastid. Its subcellular location is the chloroplast thylakoid membrane. In terms of biological role, a core subunit of photosystem II (PSII), probably helps stabilize the reaction center. The sequence is that of Photosystem II reaction center protein Psb30 from Heterosigma akashiwo (strain NIES-293 / 8280G21-1).